Reading from the N-terminus, the 389-residue chain is Chalcone synthase 1 (389 aa).

Residue C164 is part of the active site.

This sequence belongs to the thiolase-like superfamily. Chalcone/stilbene synthases family.

The enzyme catalyses (E)-4-coumaroyl-CoA + 3 malonyl-CoA + 3 H(+) = 2',4,4',6'-tetrahydroxychalcone + 3 CO2 + 4 CoA. It functions in the pathway secondary metabolite biosynthesis; flavonoid biosynthesis. In terms of biological role, the primary product of this enzyme is 4,2',4',6'-tetrahydroxychalcone (also termed naringenin-chalcone or chalcone) which can under specific conditions spontaneously isomerize into naringenin. The polypeptide is Chalcone synthase 1 (CHS1) (Daucus carota (Wild carrot)).